A 223-amino-acid polypeptide reads, in one-letter code: Probable GTP-binding protein EngB (223 aa).

Positions 25–199 (TGVEIAFAGR…SRLLQDWFDE (175 aa)) constitute an EngB-type G domain. GTP-binding positions include 33-40 (GRSNAGKS), 60-64 (GRTQH), 78-81 (DLPG), 145-148 (TKAD), and 178-180 (FSS). 2 residues coordinate Mg(2+): Ser-40 and Thr-62.

The protein belongs to the TRAFAC class TrmE-Era-EngA-EngB-Septin-like GTPase superfamily. EngB GTPase family. Mg(2+) serves as cofactor.

Necessary for normal cell division and for the maintenance of normal septation. This chain is Probable GTP-binding protein EngB, found in Nitrosomonas eutropha (strain DSM 101675 / C91 / Nm57).